Reading from the N-terminus, the 167-residue chain is Urease accessory protein UreE (167 aa).

The interval Glu137–His158 is disordered.

The protein belongs to the UreE family.

It localises to the cytoplasm. In terms of biological role, involved in urease metallocenter assembly. Binds nickel. Probably functions as a nickel donor during metallocenter assembly. This is Urease accessory protein UreE from Pseudomonas putida (strain ATCC 700007 / DSM 6899 / JCM 31910 / BCRC 17059 / LMG 24140 / F1).